The sequence spans 351 residues: Phenoloxidase-activating factor 3 (351 aa).

Positions 1-19 (MWLSLVILGVASAIVNVST) are cleaved as a signal peptide. Residue Asn-16 is glycosylated (N-linked (GlcNAc...) asparagine). Residues 22–73 (SCTTPNGETATCLPIESCKIFWDYVVTSGADPEINSFLRASLCRQGNYVVCC) enclose the Clip domain. Disulfide bonds link Cys-23-Cys-72, Cys-33-Cys-64, Cys-39-Cys-73, Cys-89-Cys-224, Cys-127-Cys-143, Cys-167-Cys-176, Cys-268-Cys-285, and Cys-295-Cys-326. Residues 97–350 (VLGGEDTDLG…HLDWIKQNVR (254 aa)) form the Peptidase S1 domain. Residue His-142 is the Charge relay system of the active site. Residues Glu-158, Asp-160, Ala-163, and Asp-166 each contribute to the Ca(2+) site. Residue Asp-204 is the Charge relay system of the active site. Residue Ser-299 is the Charge relay system of the active site.

This sequence belongs to the peptidase S1 family. CLIP subfamily. In terms of assembly, in the active form, heterodimer of a light chain and a heavy chain; disulfide-linked. Proteolytically cleaved.

It is found in the secreted. With respect to regulation, cleavage of PPAF2 is Ca(2+)-independent. Inhibited by heparin. In terms of biological role, serine endopeptidase which, by cleaving prophenoloxidase activating factor PPAF2, is required for the activation of the prophenoloxidase cascade probably following the recognition of pathogen-derived products. The chain is Phenoloxidase-activating factor 3 from Holotrichia diomphalia (Korean black chafer).